Consider the following 441-residue polypeptide: Glutamate--tRNA ligase 1 (441 aa).

A 'HIGH' region motif is present at residues P9 to N19. Residues A239 to R243 carry the 'KMSKS' region motif. Position 242 (K242) interacts with ATP.

Belongs to the class-I aminoacyl-tRNA synthetase family. Glutamate--tRNA ligase type 1 subfamily. As to quaternary structure, monomer.

It is found in the cytoplasm. It carries out the reaction tRNA(Glu) + L-glutamate + ATP = L-glutamyl-tRNA(Glu) + AMP + diphosphate. In terms of biological role, catalyzes the attachment of glutamate to tRNA(Glu) in a two-step reaction: glutamate is first activated by ATP to form Glu-AMP and then transferred to the acceptor end of tRNA(Glu). The sequence is that of Glutamate--tRNA ligase 1 from Cereibacter sphaeroides (strain ATCC 17025 / ATH 2.4.3) (Rhodobacter sphaeroides).